Consider the following 330-residue polypeptide: Protein pelota homolog (330 aa).

It belongs to the eukaryotic release factor 1 family. Pelota subfamily. In terms of assembly, monomer. A divalent metal cation is required as a cofactor.

It localises to the cytoplasm. Functionally, may function in recognizing stalled ribosomes, interact with stem-loop structures in stalled mRNA molecules, and effect endonucleolytic cleavage of the mRNA. May play a role in the release non-functional ribosomes and degradation of damaged mRNAs. Has endoribonuclease activity. The sequence is that of Protein pelota homolog from Pyrobaculum islandicum (strain DSM 4184 / JCM 9189 / GEO3).